The chain runs to 847 residues: Leucine--tRNA ligase (847 aa).

A 'HIGH' region motif is present at residues 43–53 (PYPSGKLHMGH). The 'KMSKS' region motif lies at 607–611 (KMSKS). Lysine 610 provides a ligand contact to ATP.

This sequence belongs to the class-I aminoacyl-tRNA synthetase family.

The protein localises to the cytoplasm. It catalyses the reaction tRNA(Leu) + L-leucine + ATP = L-leucyl-tRNA(Leu) + AMP + diphosphate. The sequence is that of Leucine--tRNA ligase from Buchnera aphidicola subsp. Cinara cedri (strain Cc).